A 467-amino-acid chain; its full sequence is Glutamate--tRNA ligase 1 (467 aa).

The 'HIGH' region signature appears at 8–18; that stretch reads PSPTGHLHVGG. Residues 230–234 carry the 'KMSKS' region motif; sequence PLSKR. Position 233 (K233) interacts with ATP.

Belongs to the class-I aminoacyl-tRNA synthetase family. Glutamate--tRNA ligase type 1 subfamily. As to quaternary structure, monomer.

The protein localises to the cytoplasm. It carries out the reaction tRNA(Glu) + L-glutamate + ATP = L-glutamyl-tRNA(Glu) + AMP + diphosphate. Its function is as follows. Catalyzes the attachment of glutamate to tRNA(Glu) in a two-step reaction: glutamate is first activated by ATP to form Glu-AMP and then transferred to the acceptor end of tRNA(Glu). This Petrotoga mobilis (strain DSM 10674 / SJ95) protein is Glutamate--tRNA ligase 1.